The sequence spans 286 residues: Aminoglycoside N(3)-acetyltransferase III (286 aa).

This sequence belongs to the antibiotic N-acetyltransferase family.

It carries out the reaction a 2-deoxystreptamine antibiotic + acetyl-CoA = an N(3)-acetyl-2-deoxystreptamine antibiotic + CoA + H(+). Its function is as follows. Resistance to antibiotics containing the 2-deoxy-streptamine ring including gentamicin, kanamycin, tobramycin, neomycin and apramycin. This is Aminoglycoside N(3)-acetyltransferase III (aacC3) from Salmonella sp.